The primary structure comprises 536 residues: Global nitrogen regulator NrpR (536 aa).

The tract at residues 7-72 (VEILSILSEA…EITEKGIEEL (66 aa)) is winged helix-turn-helix. 2 NRD regions span residues 80 to 314 (RIGS…KGKF) and 315 to 536 (KVTP…YDDI).

This sequence belongs to the NrpR family. Homotetramer. Binds to a single operator as a dimer and cooperatively to two operators as a dimer pair.

With respect to regulation, under nitrogen limitation, binding of the intracellular nitrogen metabolite 2-oxoglutarate to NrpR decreases the binding affinity of NrpR to DNA, leading to initiation of transcription. Its function is as follows. Transcriptional repressor of nitrogen fixation and assimilation genes. Binds to two tandem operators in the glnA and nif promoters, thereby blocking transcription of the genes. The chain is Global nitrogen regulator NrpR from Methanococcus maripaludis (strain DSM 14266 / JCM 13030 / NBRC 101832 / S2 / LL).